The chain runs to 172 residues: Peptidyl-tRNA hydrolase (172 aa).

Y10 provides a ligand contact to tRNA. H15 (proton acceptor) is an active-site residue. TRNA-binding residues include F59, N61, and N101.

Belongs to the PTH family. As to quaternary structure, monomer.

It localises to the cytoplasm. It carries out the reaction an N-acyl-L-alpha-aminoacyl-tRNA + H2O = an N-acyl-L-amino acid + a tRNA + H(+). Hydrolyzes ribosome-free peptidyl-tRNAs (with 1 or more amino acids incorporated), which drop off the ribosome during protein synthesis, or as a result of ribosome stalling. Its function is as follows. Catalyzes the release of premature peptidyl moieties from peptidyl-tRNA molecules trapped in stalled 50S ribosomal subunits, and thus maintains levels of free tRNAs and 50S ribosomes. In Rubrobacter xylanophilus (strain DSM 9941 / JCM 11954 / NBRC 16129 / PRD-1), this protein is Peptidyl-tRNA hydrolase.